The following is a 169-amino-acid chain: Protein HIGH ARSENIC CONTENT 1, mitochondrial (169 aa).

The N-terminal 59 residues, 1-59 (MYTYSLLNLSHCRRQTRKKRKTDHTEGFLMEETKPKTVEDVETVDVYTAKGFLSTGHRY), are a transit peptide targeting the mitochondrion. Residues 60-153 (LDVRTNEEFA…WVDAGFAGDK (94 aa)) form the Rhodanese domain. C113 functions as the Cysteine persulfide intermediate in the catalytic mechanism.

As to expression, expressed in root hairs, epidermal cells at the surface of the root and in the pericycle within the stele.

Its subcellular location is the mitochondrion. The enzyme catalyses [glutaredoxin]-dithiol + arsenate + glutathione + H(+) = glutathionyl-S-S-[glutaredoxin] + arsenite + H2O. With respect to regulation, inhibited by trobenzenesulphonic acid (TNBS). In terms of biological role, arsenate reductase critical for arsenic tolerance. Reduces arsenate to arsenite in the root, facilitating efflux of arsenic back into the soil to limit both its accumulation in the root and transport to the shoot. Essential for arsenite efflux from the root, but not necessary for arsenate uptake. This Arabidopsis thaliana (Mouse-ear cress) protein is Protein HIGH ARSENIC CONTENT 1, mitochondrial.